Reading from the N-terminus, the 61-residue chain is Large ribosomal subunit protein bL28 (61 aa).

Belongs to the bacterial ribosomal protein bL28 family.

In Lactobacillus johnsonii (strain CNCM I-12250 / La1 / NCC 533), this protein is Large ribosomal subunit protein bL28.